Consider the following 444-residue polypeptide: Phosphoglucosamine mutase (444 aa).

Residue S102 is the Phosphoserine intermediate of the active site. Residues S102, D239, D241, and D243 each contribute to the Mg(2+) site. S102 is modified (phosphoserine).

This sequence belongs to the phosphohexose mutase family. Mg(2+) is required as a cofactor. Post-translationally, activated by phosphorylation.

The enzyme catalyses alpha-D-glucosamine 1-phosphate = D-glucosamine 6-phosphate. Catalyzes the conversion of glucosamine-6-phosphate to glucosamine-1-phosphate. In Mycolicibacterium paratuberculosis (strain ATCC BAA-968 / K-10) (Mycobacterium paratuberculosis), this protein is Phosphoglucosamine mutase.